Consider the following 312-residue polypeptide: Aspartate carbamoyltransferase catalytic subunit (312 aa).

Residues R54 and T55 each coordinate carbamoyl phosphate. Position 83 (K83) interacts with L-aspartate. Carbamoyl phosphate contacts are provided by R104, H132, and Q135. Positions 165 and 226 each coordinate L-aspartate. Carbamoyl phosphate-binding residues include L263 and P264.

The protein belongs to the aspartate/ornithine carbamoyltransferase superfamily. ATCase family. Heterooligomer of catalytic and regulatory chains.

It carries out the reaction carbamoyl phosphate + L-aspartate = N-carbamoyl-L-aspartate + phosphate + H(+). It functions in the pathway pyrimidine metabolism; UMP biosynthesis via de novo pathway; (S)-dihydroorotate from bicarbonate: step 2/3. Functionally, catalyzes the condensation of carbamoyl phosphate and aspartate to form carbamoyl aspartate and inorganic phosphate, the committed step in the de novo pyrimidine nucleotide biosynthesis pathway. The polypeptide is Aspartate carbamoyltransferase catalytic subunit (Methanothermobacter thermautotrophicus (strain ATCC 29096 / DSM 1053 / JCM 10044 / NBRC 100330 / Delta H) (Methanobacterium thermoautotrophicum)).